Consider the following 215-residue polypeptide: Ribose-5-phosphate isomerase A (215 aa).

Substrate-binding positions include 26-29 (TGST), 79-82 (DGAD), and 92-95 (KGGG). Catalysis depends on Glu101, which acts as the Proton acceptor. Position 119 (Lys119) interacts with substrate.

The protein belongs to the ribose 5-phosphate isomerase family. In terms of assembly, homodimer.

The catalysed reaction is aldehydo-D-ribose 5-phosphate = D-ribulose 5-phosphate. It participates in carbohydrate degradation; pentose phosphate pathway; D-ribose 5-phosphate from D-ribulose 5-phosphate (non-oxidative stage): step 1/1. Its function is as follows. Catalyzes the reversible conversion of ribose-5-phosphate to ribulose 5-phosphate. This Xylella fastidiosa (strain M12) protein is Ribose-5-phosphate isomerase A.